The primary structure comprises 236 residues: N-alpha-acetyltransferase 40 (236 aa).

The N-myristoyl glycine moiety is linked to residue G2. Residues 63–217 (SDLDQKTIDW…DCTYEILSKR (155 aa)) form the N-acetyltransferase domain. Residues Y85, 127 to 129 (DVE), and Y138 contribute to the substrate site. Residues 140–142 (VQL) and 148–153 (RKGVGK) contribute to the acetyl-CoA site. Substrate is bound at residue T174. N179 contributes to the acetyl-CoA binding site. Y211 is a substrate binding site.

It belongs to the acetyltransferase family. NAA40 subfamily.

The protein resides in the cytoplasm. Its subcellular location is the nucleus. It carries out the reaction N-terminal L-seryl-[histone H4] + acetyl-CoA = N-terminal N(alpha)-acetyl-L-seryl-[histone H4] + CoA + H(+). The catalysed reaction is N-terminal L-seryl-[histone H2A] + acetyl-CoA = N-terminal N(alpha)-acetyl-L-seryl-[histone H2A] + CoA + H(+). In terms of biological role, N-alpha-acetyltransferase that specifically mediates the acetylation of the N-terminal residues of histones H4 and H2A. In contrast to other N-alpha-acetyltransferase, has a very specific selectivity for histones H4 and H2A N-terminus and specifically recognizes the 'Ser-Gly-Arg-Gly sequence'. The protein is N-alpha-acetyltransferase 40 (naa40) of Xenopus laevis (African clawed frog).